Here is a 159-residue protein sequence, read N- to C-terminus: 2-C-methyl-D-erythritol 2,4-cyclodiphosphate synthase (159 aa).

Residues Asp10 and His12 each coordinate a divalent metal cation. Residues 10–12 and 36–37 contribute to the 4-CDP-2-C-methyl-D-erythritol 2-phosphate site; these read DVH and HS. His44 contributes to the a divalent metal cation binding site. Residues 58–60, 63–67, 102–108, 134–137, Phe141, and Arg144 contribute to the 4-CDP-2-C-methyl-D-erythritol 2-phosphate site; these read DIG, FPDTD, AQAPKMA, and TTTE.

The protein belongs to the IspF family. As to quaternary structure, homotrimer. A divalent metal cation serves as cofactor.

The catalysed reaction is 4-CDP-2-C-methyl-D-erythritol 2-phosphate = 2-C-methyl-D-erythritol 2,4-cyclic diphosphate + CMP. It functions in the pathway isoprenoid biosynthesis; isopentenyl diphosphate biosynthesis via DXP pathway; isopentenyl diphosphate from 1-deoxy-D-xylulose 5-phosphate: step 4/6. Its function is as follows. Involved in the biosynthesis of isopentenyl diphosphate (IPP) and dimethylallyl diphosphate (DMAPP), two major building blocks of isoprenoid compounds. Catalyzes the conversion of 4-diphosphocytidyl-2-C-methyl-D-erythritol 2-phosphate (CDP-ME2P) to 2-C-methyl-D-erythritol 2,4-cyclodiphosphate (ME-CPP) with a corresponding release of cytidine 5-monophosphate (CMP). This is 2-C-methyl-D-erythritol 2,4-cyclodiphosphate synthase from Idiomarina loihiensis (strain ATCC BAA-735 / DSM 15497 / L2-TR).